The chain runs to 116 residues: Large ribosomal subunit protein bL20 (116 aa).

It belongs to the bacterial ribosomal protein bL20 family.

Its function is as follows. Binds directly to 23S ribosomal RNA and is necessary for the in vitro assembly process of the 50S ribosomal subunit. It is not involved in the protein synthesizing functions of that subunit. The chain is Large ribosomal subunit protein bL20 from Helicobacter pylori (strain G27).